The following is a 223-amino-acid chain: Large ribosomal subunit protein uL6c (223 aa).

A chloroplast-targeting transit peptide spans 1 to 41 (MASSLVSSFQPRSAFLGDRNVFKVSSTPFAQVGYSSKTIEC).

It belongs to the universal ribosomal protein uL6 family. In terms of assembly, part of the 50S ribosomal subunit.

It is found in the plastid. It localises to the chloroplast. Functionally, this protein binds directly to 23S ribosomal RNA and is located at the aminoacyl-tRNA binding site of the peptidyltransferase center. The protein is Large ribosomal subunit protein uL6c (RPL6) of Arabidopsis thaliana (Mouse-ear cress).